The chain runs to 74 residues: MQLFVRAQKLHTLEVTGQETVAQIKAHVASLEGIAPEDQVVLLAGAPLEDEATLGQCGVEALTTLEVAGRMLGG.

The protein belongs to the ubiquitin family.

In Pongo abelii (Sumatran orangutan), this protein is Ubiquitin-like protein FUBI (FAU).